Here is a 664-residue protein sequence, read N- to C-terminus: UvrABC system protein C (664 aa).

Residues 63-141 (LRPGVYRMYD…IKRYRPPYNI (79 aa)) form the GIY-YIG domain. In terms of domain architecture, UVR spans 254–289 (THVQKKLVTAMEQASNDLNYELAAVYRDRLKALAFI).

This sequence belongs to the UvrC family. Interacts with UvrB in an incision complex.

The protein resides in the cytoplasm. In terms of biological role, the UvrABC repair system catalyzes the recognition and processing of DNA lesions. UvrC both incises the 5' and 3' sides of the lesion. The N-terminal half is responsible for the 3' incision and the C-terminal half is responsible for the 5' incision. This Zymomonas mobilis subsp. mobilis (strain ATCC 31821 / ZM4 / CP4) protein is UvrABC system protein C.